Consider the following 219-residue polypeptide: tRNA (guanine-N(7)-)-methyltransferase (219 aa).

The S-adenosyl-L-methionine site is built by glutamate 46, glutamate 71, asparagine 100, and aspartate 122. Residue aspartate 122 is part of the active site. Residues lysine 126, aspartate 158, and 199-202 (TEYE) contribute to the substrate site.

It belongs to the class I-like SAM-binding methyltransferase superfamily. TrmB family.

The catalysed reaction is guanosine(46) in tRNA + S-adenosyl-L-methionine = N(7)-methylguanosine(46) in tRNA + S-adenosyl-L-homocysteine. Its pathway is tRNA modification; N(7)-methylguanine-tRNA biosynthesis. In terms of biological role, catalyzes the formation of N(7)-methylguanine at position 46 (m7G46) in tRNA. The protein is tRNA (guanine-N(7)-)-methyltransferase of Leuconostoc citreum (strain KM20).